We begin with the raw amino-acid sequence, 283 residues long: 5'-nucleotidase SurE (283 aa).

A divalent metal cation is bound by residues D14, D15, S47, and N105.

Belongs to the SurE nucleotidase family. A divalent metal cation is required as a cofactor.

It is found in the cytoplasm. It catalyses the reaction a ribonucleoside 5'-phosphate + H2O = a ribonucleoside + phosphate. In terms of biological role, nucleotidase that shows phosphatase activity on nucleoside 5'-monophosphates. This chain is 5'-nucleotidase SurE, found in Chlamydia trachomatis serovar A (strain ATCC VR-571B / DSM 19440 / HAR-13).